Here is a 150-residue protein sequence, read N- to C-terminus: Snake venom vascular endothelial growth factor toxin barietin (150 aa).

An N-terminal signal peptide occupies residues 1–24 (MAAYLLAVAILFCIQGWPSGTVQG). Pyrrolidone carboxylic acid (Glu) is present on Glu25. Cystine bridges form between Cys38-Cys80, Cys69-Cys115, and Cys73-Cys117. The disordered stretch occupies residues 119-150 (PRSGSRVNIGKHKRSPEEGEREPSSPLTPGSL). The propeptide occupies 122 to 150 (GSRVNIGKHKRSPEEGEREPSSPLTPGSL).

The protein belongs to the PDGF/VEGF growth factor family. Snake venom VEGF subfamily. As to quaternary structure, homodimer; disulfide-linked. Interacts with high affinity with VEGF receptor-2 (KDR), and with a lower affinity with VEGF receptor-1 (FLT1). Does not bind VEGF receptor-3 (FLT4) and neuropilin-1 (NRP1). Expressed by the venom gland.

The protein resides in the secreted. Snake venom VEGFs that may contribute to venom dispersion and prey subjugation by inducing vascular permeability and hypotension. This protein induces an increase in capillary permeability after intradermal injection, as well as a drastic hypotensive effect after intravenous injection. The hypotension is mediated by nitric oxide (NO), which is produced by VEGF-activated endothelium NO synthase. Also induces angiogenesis in vitro, probably through VEGF receptor (KDR/VEGFR-2) signaling. This is Snake venom vascular endothelial growth factor toxin barietin from Bitis arietans (African puff adder).